The chain runs to 450 residues: Caspase Dronc (450 aa).

Positions 1–134 (MQPPELEIGM…RTSRKSADIV (134 aa)) are excised as a propeptide. The region spanning 64 to 109 (EKDVRVEQHRRLLLKITQRGPTAYNLLINALRNINCLDAAVLLESV) is the CARD domain. The required for binding Diap1 stretch occupies residues 114 to 125 (SRPPFISLNERR). Active-site residues include His-271 and Cys-318. The propeptide occupies 321–324 (DEYD).

This sequence belongs to the peptidase C14A family. In terms of assembly, interacts (via residues 114-125) with Diap1 (via BIR 2 domain); binding blocks Dronc-mediated cell death. Can form a stable complex with Drice. Rpr, hid and grim can out-compete Dronc for binding Diap1, therefore removing Diap1-mediated ubiquitination. Interacts (via CARD domain) with Dark (via Dark CARD and WD domains); the interaction stimulates Dark oligomerization to form the apoptosome and brings pairs of Dronc molecules together on the apoptosome to facilitate their dimerization and activation by autocatalytic cleavage. Binding to Dark stimulates apoptosome assembly. After autocatalytic cleavage the Dronc caspase domain dissociates from the apoptosome but the CARD domain remains associated. Post-translationally, ubiquitinated by Diap1, leading to its subsequent degradation. Ubiquitously expressed in embryos during early stages of development. In late third instar larvae, dramatic up-regulation in salivary glands and midgut before histolysis of these tissues.

The protein localises to the cytoplasm. The enzyme catalyses Strict requirement for an Asp residue at position P1 and with a marked preference for His at position P2. It has a preferred cleavage sequence of Leu-Gly-His-Asp-|-Xaa.. With respect to regulation, zymogen activated by autocatalytic cleavage; association with the Dark apoptosome brings multiple molecules together to facilitate their dimerization and activation by autocatalytic cleavage. Its function is as follows. Involved in the activation cascade of caspases responsible for apoptosis execution. Effector of steroid-mediated apoptosis during insect metamorphosis. Overexpression promotes programmed cell death. Interaction with Diap1 is required to suppress Dronc-mediated cell death; via Diap1-mediated ubiquitination of Dronc. Rate-limiting caspase in rpr, grim and hid death pathway. Recruited to the Dark apoptosome, an adapter protein complex that mediates activation of the caspase cascade in programmed cell death initiated by the intrinsic apoptosis pathway. Association with the Dark apoptosome stimulates autocatalytic cleavage and activation of Dronc, promoting Dronc-mediated cleavage of downstream effector caspases such as Drice. This Drosophila melanogaster (Fruit fly) protein is Caspase Dronc.